A 780-amino-acid polypeptide reads, in one-letter code: Dynamin-related protein 3B (780 aa).

S2 is modified (N-acetylserine). One can recognise a Dynamin-type G domain in the interval 40–315; it reads TIALPQVAVV…LVQHIKALLP (276 aa). The tract at residues 50–57 is G1 motif; the sequence is GSQSSGKS. 50–57 is a GTP binding site; that stretch reads GSQSSGKS. Residues 76 to 78 are G2 motif; the sequence is CTR. The G3 motif stretch occupies residues 157–160; that stretch reads DLPG. GTP is bound by residues 157-161 and 226-229; these read DLPGI and TKLD. Residues 226-229 are G4 motif; it reads TKLD. The tract at residues 256–259 is G5 motif; it reads VNRS. Disordered stretches follow at residues 536–558 and 573–592; these read PVAR…QIKT and QAVP…STSW. The span at 539–548 shows a compositional bias: basic and acidic residues; the sequence is RPRDTVEPER. Residues 549–558 show a composition bias toward polar residues; it reads TASSGSQIKT. A GED domain is found at 654–745; the sequence is IEITKLLLKS…TLDELPLEAE (92 aa). Residues 753 to 770 are compositionally biased toward basic and acidic residues; the sequence is IGSEAKHEELPGTRRSRT. A disordered region spans residues 753 to 780; that stretch reads IGSEAKHEELPGTRRSRTETNGNGRLHM. Residues 771–780 show a composition bias toward polar residues; the sequence is ETNGNGRLHM.

The protein belongs to the TRAFAC class dynamin-like GTPase superfamily. Dynamin/Fzo/YdjA family. In terms of assembly, interacts with ARC5 on peroxisomes and ELM1 on mitochondria.

Its subcellular location is the mitochondrion. It localises to the peroxisome. Its function is as follows. Involved in the control of mitochondrial and peroxisomal division and morphology. The chain is Dynamin-related protein 3B (DRP3B) from Arabidopsis thaliana (Mouse-ear cress).